A 715-amino-acid polypeptide reads, in one-letter code: Fatty acid oxidation complex subunit alpha (715 aa).

The enoyl-CoA hydratase/isomerase stretch occupies residues 1–190; sequence MIYEGKAITV…KVGAVDAVVA (190 aa). Aspartate 297 is a substrate binding site. Residues 312 to 715 are 3-hydroxyacyl-CoA dehydrogenase; that stretch reads HDVKQAAVLG…MAKNGQRFFN (404 aa). NAD(+)-binding positions include methionine 325, aspartate 344, 401–403, lysine 408, and serine 430; that span reads VVE. Histidine 451 serves as the catalytic For 3-hydroxyacyl-CoA dehydrogenase activity. Asparagine 454 is an NAD(+) binding site. The substrate site is built by asparagine 501 and tyrosine 660.

In the N-terminal section; belongs to the enoyl-CoA hydratase/isomerase family. The protein in the C-terminal section; belongs to the 3-hydroxyacyl-CoA dehydrogenase family. As to quaternary structure, heterotetramer of two alpha chains (FadB) and two beta chains (FadA).

The catalysed reaction is a (3S)-3-hydroxyacyl-CoA + NAD(+) = a 3-oxoacyl-CoA + NADH + H(+). The enzyme catalyses a (3S)-3-hydroxyacyl-CoA = a (2E)-enoyl-CoA + H2O. It carries out the reaction a 4-saturated-(3S)-3-hydroxyacyl-CoA = a (3E)-enoyl-CoA + H2O. It catalyses the reaction (3S)-3-hydroxybutanoyl-CoA = (3R)-3-hydroxybutanoyl-CoA. The catalysed reaction is a (3Z)-enoyl-CoA = a 4-saturated (2E)-enoyl-CoA. The enzyme catalyses a (3E)-enoyl-CoA = a 4-saturated (2E)-enoyl-CoA. It functions in the pathway lipid metabolism; fatty acid beta-oxidation. In terms of biological role, involved in the aerobic and anaerobic degradation of long-chain fatty acids via beta-oxidation cycle. Catalyzes the formation of 3-oxoacyl-CoA from enoyl-CoA via L-3-hydroxyacyl-CoA. It can also use D-3-hydroxyacyl-CoA and cis-3-enoyl-CoA as substrate. This is Fatty acid oxidation complex subunit alpha from Pseudomonas putida (strain ATCC 700007 / DSM 6899 / JCM 31910 / BCRC 17059 / LMG 24140 / F1).